The sequence spans 651 residues: Forkhead box protein K2 (651 aa).

The segment covering 1–13 (MAAAAALSGAGAP) has biased composition (low complexity). The segment at 1-29 (MAAAAALSGAGAPPAGGGAGGGGSPPGGW) is disordered. Residues 14 to 26 (PAGGGAGGGGSPP) are compositionally biased toward gly residues. S24 bears the Phosphoserine mark. The FHA domain maps to 48–119 (VTIGRNSSQG…NGVFVDGVFQ (72 aa)). Positions 120 to 162 (RRGAPPLQLPRVCTFRFPSTNIKITFTALSSEKREKQEAPESP) are required for interaction with DVL2 and SUDS3. R135 is modified (omega-N-methylarginine). Disordered regions lie at residues 150-171 (SEKREKQEAPESPVKPVQPHIS) and 194-251 (TISA…SKPP). Glycyl lysine isopeptide (Lys-Gly) (interchain with G-Cter in SUMO2) cross-links involve residues K152 and K155. Residues 194 to 203 (TISAANSCPS) are compositionally biased toward polar residues. Residue S230 is modified to Phosphoserine. Over residues 233-249 (ENEKEASGGDSPKDDSK) the composition is skewed to basic and acidic residues. The fork-head DNA-binding region spans 249–344 (KPPYSYAQLI…EQAFRKRRPR (96 aa)). Residues 291-309 (KGWQNSIRHNLSLNRYFIK) are DNA-binding; major groove. Residues L301, S302, N304, and F307 each coordinate Mg(2+). DNA-binding; minor groove regions lie at residues 319–323 (KGSFW) and 339–344 (RKRRPR). The interval 350 to 399 (RTPLGPLSSRSAPASPNHAGVLSAHSSGAQTPESLSREGSPAPLEPEPGA) is disordered. The residue at position 364 (S364) is a Phosphoserine. Residues 373 to 383 (AHSSGAQTPES) show a composition bias toward polar residues. A phosphoserine mark is found at S389, S415, and S419. K518 is covalently cross-linked (Glycyl lysine isopeptide (Lys-Gly) (interchain with G-Cter in SUMO2)). S590 carries the post-translational modification Phosphoserine. The span at 601 to 614 (ASASLPTKRQNGDQ) shows a compositional bias: polar residues. The interval 601–623 (ASASLPTKRQNGDQAEQPELKRV) is disordered. A Glycyl lysine isopeptide (Lys-Gly) (interchain with G-Cter in SUMO2) cross-link involves residue K624.

In terms of assembly, component of SIN3A-, but not SIN3B-, containing multiprotein complexes. Interacts with DVL1, DVL2 (when phosphorylated) and DVL3; the interaction induces DVL2 nuclear translocation. Interacts with SUDS3. Interacts with BAP1 (when phosphorylated); leading to recruit the PR-DUB complex and repress FOXK2 target genes. Accessory component of the polycomb repressive deubiquitinase (PR-DUB) complex, at least composed of BAP1, one of ASXL1, ASXL2 or (probably) ASXL3 and one of MBD5 or MBD6. The PR-DUB core associates with a number of accessory proteins, including FOXK1, FOXK2, KDM1B, HCFC1 and OGT. Post-translationally, hyperphosphorylated during mitosis by CDK1 and, to a lower extent, CDK2. Phosphorylation at Ser-364 and Ser-419 affects stability by promoting degradation. Expressed in a wide range of adult brain regions, namely the piriform cortex, the major islands of Calleja and cells lining the lateral ventricles, the bed nucleus of stria terminalis, the paraventricular thalamic nucleus, habenula and all structures of the hippocampus. Also present in the hypothalamus, cerebral cortex and in the Purkinje cell layer in the cerebellum. Additionally expressed in dopamine neurons of the substantia and more sparsely in the ventral tegmental area.

The protein localises to the nucleus. It is found in the cytoplasm. Functionally, transcriptional regulator involved in different processes such as glucose metabolism, aerobic glycolysis and autophagy. Recognizes and binds the forkhead DNA sequence motif (5'-GTAAACA-3') and can both act as a transcription activator or repressor, depending on the context. Together with FOXK1, acts as a key regulator of metabolic reprogramming towards aerobic glycolysis, a process in which glucose is converted to lactate in the presence of oxygen. Acts by promoting expression of enzymes for glycolysis (such as hexokinase-2 (HK2), phosphofructokinase, pyruvate kinase (PKLR) and lactate dehydrogenase), while suppressing further oxidation of pyruvate in the mitochondria by up-regulating pyruvate dehydrogenase kinases PDK1 and PDK4. Probably plays a role in gluconeogenesis during overnight fasting, when lactate from white adipose tissue and muscle is the main substrate. Together with FOXK1, acts as a negative regulator of autophagy in skeletal muscle: in response to starvation, enters the nucleus, binds the promoters of autophagy genes and represses their expression, preventing proteolysis of skeletal muscle proteins. In addition to the 5'-GTAAACA-3' DNA motif, also binds the 5'-TGANTCA-3' palindromic DNA motif, and co-associates with JUN/AP-1 to activate transcription. Also able to bind to a minimal DNA heteroduplex containing a G/T-mismatch with 5'-TRT[G/T]NB-3' sequence. Binds to NFAT-like motifs (purine-rich) in the IL2 promoter. Positively regulates WNT/beta-catenin signaling by translocating DVL proteins into the nucleus. Accessory component of the polycomb repressive deubiquitinase (PR-DUB) complex; recruits the PR-DUB complex to specific FOXK2-bound genes. The sequence is that of Forkhead box protein K2 from Mus musculus (Mouse).